The sequence spans 145 residues: D-aminoacyl-tRNA deacylase (145 aa).

The Gly-cisPro motif, important for rejection of L-amino acids signature appears at Gly-137–Pro-138.

Belongs to the DTD family. Homodimer.

It is found in the cytoplasm. It catalyses the reaction glycyl-tRNA(Ala) + H2O = tRNA(Ala) + glycine + H(+). The catalysed reaction is a D-aminoacyl-tRNA + H2O = a tRNA + a D-alpha-amino acid + H(+). Its function is as follows. An aminoacyl-tRNA editing enzyme that deacylates mischarged D-aminoacyl-tRNAs. Also deacylates mischarged glycyl-tRNA(Ala), protecting cells against glycine mischarging by AlaRS. Acts via tRNA-based rather than protein-based catalysis; rejects L-amino acids rather than detecting D-amino acids in the active site. By recycling D-aminoacyl-tRNA to D-amino acids and free tRNA molecules, this enzyme counteracts the toxicity associated with the formation of D-aminoacyl-tRNA entities in vivo and helps enforce protein L-homochirality. This Photorhabdus laumondii subsp. laumondii (strain DSM 15139 / CIP 105565 / TT01) (Photorhabdus luminescens subsp. laumondii) protein is D-aminoacyl-tRNA deacylase.